The chain runs to 342 residues: Ribosomal RNA small subunit methyltransferase H (342 aa).

S-adenosyl-L-methionine is bound by residues 42-44 (GGH), Asp-61, Phe-88, Asp-119, and Gln-126.

The protein belongs to the methyltransferase superfamily. RsmH family.

It localises to the cytoplasm. The enzyme catalyses cytidine(1402) in 16S rRNA + S-adenosyl-L-methionine = N(4)-methylcytidine(1402) in 16S rRNA + S-adenosyl-L-homocysteine + H(+). Functionally, specifically methylates the N4 position of cytidine in position 1402 (C1402) of 16S rRNA. The polypeptide is Ribosomal RNA small subunit methyltransferase H (Corynebacterium jeikeium (strain K411)).